Here is a 2111-residue protein sequence, read N- to C-terminus: Glutamate synthase [NADH] (2111 aa).

Cysteine 69 acts as the Nucleophile in catalysis. Positions 69–469 constitute a Glutamine amidotransferase type-2 domain; that stretch reads CGVGFTCHIK…PGRMLLVDTK (401 aa). Residues 969-990 form a disordered region; that stretch reads GGKSNTGEGGEDPARSQRLANG. 1139–1191 is a binding site for FMN; sequence VAETHQTLVLNDLRGRVVIQTDGQIRTGRDVAIACLLGAEEWGFATTPLIALG. [3Fe-4S] cluster-binding residues include cysteine 1192, cysteine 1198, and cysteine 1203.

It belongs to the glutamate synthase family. As to quaternary structure, homotrimer. [3Fe-4S] cluster is required as a cofactor. The cofactor is FAD. It depends on FMN as a cofactor.

The protein resides in the cytoplasm. The catalysed reaction is 2 L-glutamate + NAD(+) = L-glutamine + 2-oxoglutarate + NADH + H(+). Its pathway is amino-acid biosynthesis; L-glutamate biosynthesis via GLT pathway; L-glutamate from 2-oxoglutarate and L-glutamine (NAD(+) route): step 1/1. It functions in the pathway energy metabolism; nitrogen metabolism. In the presence of 10 mM allantoin, the activity is reduced more than 25%. Functionally, forms L-glutamate from L-glutamine and 2-oxoglutarate. Represents an alternative pathway to L-glutamate dehydrogenase for the biosynthesis of L-glutamate. Participates with glutamine synthetase in ammonia assimilation processes. The enzyme is specific for NADH, L-glutamine and 2-oxoglutarate. The polypeptide is Glutamate synthase [NADH] (glt1) (Schizosaccharomyces pombe (strain 972 / ATCC 24843) (Fission yeast)).